We begin with the raw amino-acid sequence, 1215 residues long: MGAMAYPLLLCLLLAQLGLGAVGASRDPQGRPDSPRERTPKGKPHAQQPGRASASDSSAPWSRSTDGTILAQKLAEEVPMDVASYLYTGDSHQLKRANCSGRYELAGLPGKWPALASAHPSLHRALDTLTHATNFLNVMLQSNKSREQNLQDDLDWYQALVWSLLEGEPSISRAAITFSTDSLSAPAPQVFLQATREESRILLQDLSSSAPHLANATLETEWFHGLRRKWRPHLHRRGPNQGPRGLGHSWRRKDGLGGDKSHFKWSPPYLECENGSYKPGWLVTLSSAIYGLQPNLVPEFRGVMKVDINLQKVDIDQCSSDGWFSGTHKCHLNNSECMPIKGLGFVLGAYECICKAGFYHPGVLPVNNFRRRGPDQHISGSTKDVSEEAYVCLPCREGCPFCADDSPCFVQEDKYLRLAIISFQALCMLLDFVSMLVVYHFRKAKSIRASGLILLETILFGSLLLYFPVVILYFEPSTFRCILLRWARLLGFATVYGTVTLKLHRVLKVFLSRTAQRIPYMTGGRVMRMLAVILLVVFWFLIGWTSSVCQNLEKQISLIGQGKTSDHLIFNMCLIDRWDYMTAVAEFLFLLWGVYLCYAVRTVPSAFHEPRYMAVAVHNELIISAIFHTIRFVLASRLQSDWMLMLYFAHTHLTVTVTIGLLLIPKFSHSSNNPRDDIATEAYEDELDMGRSGSYLNSSINSAWSEHSLDPEDIRDELKKLYAQLEIYKRKKMITNNPHLQKKRCSKKGLGRSIMRRITEIPETVSRQCSKEDKEGADHGTAKGTALIRKNPPESSGNTGKSKEETLKNRVFSLKKSHSTYDHVRDQTEESSSLPTESQEEETTENSTLESLSGKKLTQKLKEDSEAESTESVPLVCKSASAHNLSSEKKTGHPRTSMLQKSLSVIASAKEKTLGLAGKTQTAGVEERTKSQKPLPKDKETNRNHSNSDNTETKDPAPQNSNPAEEPRKPQKSGIMKQQRVNPTTANSDLNPGTTQMKDNFDIGEVCPWEVYDLTPGPVPSESKVQKHVSIVASEMEKNPTFSLKEKSHHKPKAAEVCQQSNQKRIDKAEVCLWESQGQSILEDEKLLISKTPVLPERAKEENGGQPRAANVCAGQSEELPPKAVASKTENENLNQIGHQEKKTSSSEENVRGSYNSSNNFQQPLTSRAEVCPWEFETPAQPNAGRSVALPASSALSANKIAGPRKEEIWDSFKV.

Residues 1–23 (MGAMAYPLLLCLLLAQLGLGAVG) form the signal peptide. Residues 23-66 (GASRDPQGRPDSPRERTPKGKPHAQQPGRASASDSSAPWSRSTD) form a disordered region. The Extracellular segment spans residues 24–417 (ASRDPQGRPD…CFVQEDKYLR (394 aa)). Basic and acidic residues predominate over residues 28–40 (PQGRPDSPRERTP). Residues 52–64 (ASASDSSAPWSRS) are compositionally biased toward low complexity. Residues 85–281 (YLYTGDSHQL…CENGSYKPGW (197 aa)) form a cache-like region region. 2 N-linked (GlcNAc...) asparagine glycosylation sites follow: asparagine 98 and asparagine 143. Cysteine 99 and cysteine 272 are joined by a disulfide. Residues serine 172 and arginine 173 each contribute to the glycine site. The N-linked (GlcNAc...) asparagine glycan is linked to asparagine 215. Glutamate 271 lines the glycine pocket. Residue asparagine 274 is glycosylated (N-linked (GlcNAc...) asparagine). Residue aspartate 307 coordinates glycine. N-linked (GlcNAc...) asparagine glycosylation occurs at asparagine 333. Residues 418–439 (LAIISFQALCMLLDFVSMLVVY) traverse the membrane as a helical segment. Over 440 to 451 (HFRKAKSIRASG) the chain is Cytoplasmic. A helical transmembrane segment spans residues 452–474 (LILLETILFGSLLLYFPVVILYF). Residues 475–478 (EPST) lie on the Extracellular side of the membrane. A helical membrane pass occupies residues 479-501 (FRCILLRWARLLGFATVYGTVTL). Cysteine 481 and cysteine 573 are joined by a disulfide. Topologically, residues 502 to 525 (KLHRVLKVFLSRTAQRIPYMTGGR) are cytoplasmic. A helical transmembrane segment spans residues 526–547 (VMRMLAVILLVVFWFLIGWTSS). Over 548-576 (VCQNLEKQISLIGQGKTSDHLIFNMCLID) the chain is Extracellular. Residues 577–597 (RWDYMTAVAEFLFLLWGVYLC) form a helical membrane-spanning segment. At 598–611 (YAVRTVPSAFHEPR) the chain is on the cytoplasmic side. Residues 612 to 633 (YMAVAVHNELIISAIFHTIRFV) form a helical membrane-spanning segment. Topologically, residues 634–642 (LASRLQSDW) are extracellular. The helical transmembrane segment at 643–664 (MLMLYFAHTHLTVTVTIGLLLI) threads the bilayer. The Cytoplasmic portion of the chain corresponds to 665 to 1215 (PKFSHSSNNP…KEEIWDSFKV (551 aa)). 3 positions are modified to phosphoserine: serine 694, serine 705, and serine 708. The tract at residues 757–999 (RITEIPETVS…LNPGTTQMKD (243 aa)) is disordered. 2 stretches are compositionally biased toward basic and acidic residues: residues 769–781 (CSKE…DHGT) and 819–828 (STYDHVRDQT). Lysine 774 is covalently cross-linked (Glycyl lysine isopeptide (Lys-Gly) (interchain with G-Cter in ubiquitin)). The residue at position 865 (serine 865) is a Phosphoserine. Residues 925–943 (VEERTKSQKPLPKDKETNR) show a composition bias toward basic and acidic residues. The residue at position 946 (serine 946) is a Phosphoserine. A compositionally biased stretch (polar residues) spans 979–998 (QRVNPTTANSDLNPGTTQMK). 2 consecutive short sequence motifs (VCPWE motif) follow at residues 1006-1010 (VCPWE) and 1071-1075 (VCLWE). Serine 1080 carries the post-translational modification Phosphoserine. The segment at 1117 to 1164 (SEELPPKAVASKTENENLNQIGHQEKKTSSSEENVRGSYNSSNNFQQP) is disordered. The span at 1139-1151 (HQEKKTSSSEENV) shows a compositional bias: basic and acidic residues. Over residues 1153–1164 (GSYNSSNNFQQP) the composition is skewed to polar residues. A VCPWE motif 3 motif is present at residues 1171 to 1175 (VCPWE).

This sequence belongs to the G-protein coupled receptor 3 family. Homodimer. Associates with the RGS7-GNB5 complex, promoting its localization to the cell membrane and regulating its GTPase activator activity. Interacts (via VCPWE motifs) with GNAO1. Interacts with GPC4. Interacts with EGFLAM.

It localises to the cell membrane. Its subcellular location is the postsynaptic cell membrane. It is found in the presynaptic cell membrane. The protein localises to the nucleus. Its function is as follows. Metabotropic receptor for glycine that controls synapse formation and function in the brain. Acts as an atypical G-protein coupled receptor that recruits and regulates the RGS7-GNB5 complex instead of activating G proteins. In absence of glycine ligand, promotes the GTPase activator activity of RGS7, increasing the GTPase activity of G protein alpha subunits, thereby driving them into their inactive GDP-bound form. Glycine-binding changes the conformation of the intracellular surface, inhibiting the GTPase activator activity of the RGS7-GNB5 complex, promoting G protein alpha subunits into their active GTP-bound form and regulating cAMP levels. Also able to bind taurine, a compound closely related to glycine, but with a two-fold lower affinity. Glycine receptor-dependent regulation of cAMP controls key ion channels, kinases and neurotrophic factors involved in neuronal excitability and synaptic transmission. Plays a pivotal role in regulating mood and cognition via its ability to regulate neuronal excitability in L2/L3 pyramidal neurons of the prefrontal cortex. Also involved in spatial learning by regulating hippocampal CA1 neuronal excitability. Acts as a synaptic organizer in the hippocampus, required for proper mossy fiber-CA3 neurocircuitry establishment, structure and function: induces presynaptic differentiation in contacting axons via its interaction with GPC4. In addition to glycine, may also act as a receptor for osteocalcin (BGLAP) hormone: osteocalcin-binding initiates a signaling response that prevents neuronal apoptosis in the hippocampus and regulates the synthesis of neurotransmitters. This is Metabotropic glycine receptor from Homo sapiens (Human).